We begin with the raw amino-acid sequence, 515 residues long: 2-isopropylmalate synthase (515 aa).

Residues 4–266 (IKFFDTTLRD…ETRLNLQEIK (263 aa)) form the Pyruvate carboxyltransferase domain. The Mn(2+) site is built by aspartate 13, histidine 201, histidine 203, and asparagine 237. A regulatory domain region spans residues 391–515 (QLSSIQVQYG…RGENEKVATP (125 aa)).

This sequence belongs to the alpha-IPM synthase/homocitrate synthase family. LeuA type 1 subfamily. As to quaternary structure, homodimer. The cofactor is Mn(2+).

Its subcellular location is the cytoplasm. It carries out the reaction 3-methyl-2-oxobutanoate + acetyl-CoA + H2O = (2S)-2-isopropylmalate + CoA + H(+). It participates in amino-acid biosynthesis; L-leucine biosynthesis; L-leucine from 3-methyl-2-oxobutanoate: step 1/4. In terms of biological role, catalyzes the condensation of the acetyl group of acetyl-CoA with 3-methyl-2-oxobutanoate (2-ketoisovalerate) to form 3-carboxy-3-hydroxy-4-methylpentanoate (2-isopropylmalate). The polypeptide is 2-isopropylmalate synthase (Geobacillus kaustophilus (strain HTA426)).